Here is a 1544-residue protein sequence, read N- to C-terminus: Lysine-specific demethylase 5B (1544 aa).

A compositionally biased stretch (pro residues) spans 1-14; it reads MEPATTLPPGPRPA. The interval 1–22 is disordered; the sequence is MEPATTLPPGPRPALPLGGPGP. In terms of domain architecture, JmjN spans 32–73; the sequence is CPVFEPSWEEFADPFAFIHKIRPIAEQTGICKVRPPPDWQPP. An ARID domain is found at 97–187; it reads TRVKLNFLDQ…ILNPYNLFLS (91 aa). Residues K148, K204, K209, K242, K274, and K278 each participate in a glycyl lysine isopeptide (Lys-Gly) (interchain with G-Cter in SUMO2) cross-link. Positions 200–228 are disordered; it reads TSDTKDKEYKPHDIPQRQSVQPAETCPPA. The span at 202-214 shows a compositional bias: basic and acidic residues; it reads DTKDKEYKPHDIP. The interval 269–297 is disordered; it reads NEKEMKSTIKQEPTEKKDCELESEKEKPK. Residues 309–359 form a PHD-type 1 zinc finger; the sequence is LYVCLLCGSGNDEDRLLLCDGCDDSYHTFCLVPPLHDVPKGDWRCPKCLAQ. 2-oxoglutarate is bound at residue Y425. One can recognise a JmjC domain in the interval 453-619; it reads EYLDSGWNLN…LGRQCVEHYR (167 aa). Residues H499 and E501 each contribute to the Fe cation site. Positions 507, 509, and 517 each coordinate 2-oxoglutarate. H587 contributes to the Fe cation binding site. A C5HC2 zinc finger spans residues 692–744; the sequence is CIKCKTTCFMSAISCSCKPGLLVCLHHVKELCSCPPYKYNLRYRYTLDDLYPM. A Glycyl lysine isopeptide (Lys-Gly) (interchain with G-Cter in SUMO2) cross-link involves residue K769. K832 carries the N6-acetyllysine modification. S986 carries the phosphoserine modification. A PHD-type 2 zinc finger spans residues 1176–1224; sequence MKVCLCQKTPATPMIQCELCRDAFHTSCVAAPSISQSSRIWLCPHCRRS. Residues 1297–1314 are compositionally biased toward polar residues; it reads QASATDKVSQPPGTTSFS. The tract at residues 1297–1318 is disordered; that stretch reads QASATDKVSQPPGTTSFSLPDD. Residue S1328 is modified to Phosphoserine. Residues 1374–1388 are compositionally biased toward polar residues; it reads PSSVQQADRSSPVRS. A disordered region spans residues 1374–1447; it reads PSSVQQADRS…IKLSHPKDMD (74 aa). Positions 1389–1427 are enriched in basic and acidic residues; the sequence is SSEKNDCLRGKRDAINSPERKLKRRPEREGLPSERWDRV. Basic residues predominate over residues 1428 to 1441; that stretch reads KHMRTPQKKKIKLS. A Glycyl lysine isopeptide (Lys-Gly) (interchain with G-Cter in SUMO2) cross-link involves residue K1450. S1456 carries the post-translational modification Phosphoserine. A PHD-type 3 zinc finger spans residues 1484–1538; sequence DAICPAVSCLQPEGDEVDWVQCDGSCNQWFHQVCVGVSPEMAEKEDYICVRCTGK.

It belongs to the JARID1 histone demethylase family. Interacts with FOXG1B, PAX9, MYC, MYCN and RB1. Interacts with HDAC1, HDAC4, HDAC5 and HDAC7. Interacts (via PHD-type 1 zinc finger) with histone H3 unmodified at 'Lys-4'; the interaction is inhibited when histone H3 is methylated at 'Arg-2' or 'Lys-4'. Fe(2+) is required as a cofactor. In terms of tissue distribution, present at highest levels in testis, where it is enriched in spermatogonia and pachytene cells (at protein level).

It is found in the nucleus. It carries out the reaction N(6),N(6),N(6)-trimethyl-L-lysyl(4)-[histone H3] + 3 2-oxoglutarate + 3 O2 = L-lysyl(4)-[histone H3] + 3 formaldehyde + 3 succinate + 3 CO2. In terms of biological role, histone demethylase that demethylates 'Lys-4' of histone H3, thereby playing a central role in histone code. Does not demethylate histone H3 'Lys-9' or H3 'Lys-27'. Demethylates trimethylated, dimethylated and monomethylated H3 'Lys-4'. Acts as a transcriptional corepressor for FOXG1B and PAX9. Represses the CLOCK-BMAL1 heterodimer-mediated transcriptional activation of the core clock component PER2. This Mus musculus (Mouse) protein is Lysine-specific demethylase 5B (Kdm5b).